Reading from the N-terminus, the 312-residue chain is Aspartate carbamoyltransferase catalytic subunit (312 aa).

Carbamoyl phosphate-binding residues include arginine 58 and threonine 59. Residue lysine 86 participates in L-aspartate binding. Arginine 108, histidine 136, and glutamine 139 together coordinate carbamoyl phosphate. The L-aspartate site is built by arginine 169 and arginine 223. Carbamoyl phosphate-binding residues include glycine 264 and proline 265.

This sequence belongs to the aspartate/ornithine carbamoyltransferase superfamily. ATCase family. In terms of assembly, heterododecamer (2C3:3R2) of six catalytic PyrB chains organized as two trimers (C3), and six regulatory PyrI chains organized as three dimers (R2).

It catalyses the reaction carbamoyl phosphate + L-aspartate = N-carbamoyl-L-aspartate + phosphate + H(+). It functions in the pathway pyrimidine metabolism; UMP biosynthesis via de novo pathway; (S)-dihydroorotate from bicarbonate: step 2/3. Catalyzes the condensation of carbamoyl phosphate and aspartate to form carbamoyl aspartate and inorganic phosphate, the committed step in the de novo pyrimidine nucleotide biosynthesis pathway. The protein is Aspartate carbamoyltransferase catalytic subunit of Desulforamulus reducens (strain ATCC BAA-1160 / DSM 100696 / MI-1) (Desulfotomaculum reducens).